A 292-amino-acid chain; its full sequence is Protein LRATD1 (292 aa).

S38 carries the phosphoserine modification. The LRAT domain occupies 133–228; that stretch reads PAPEPPAPAP…CRFGKREFKA (96 aa).

This sequence belongs to the LRATD family. As to expression, only detected in testis. Highly expressed in colon cancer cells.

The protein resides in the cytoplasm. In terms of biological role, may play a role in cell morphology and motility. This Homo sapiens (Human) protein is Protein LRATD1.